The following is a 563-amino-acid chain: BOS complex subunit NCLN (563 aa).

A signal peptide spans 1–42 (MLEEAGEVLENVLKASCLPLGFIVFLPAVLLLVAPPLPAADA). The Lumenal portion of the chain corresponds to 43-522 (AHEFTVYRMQ…VMNAYRVKPA (480 aa)). N-linked (GlcNAc...) asparagine glycosylation is found at asparagine 241 and asparagine 428. Residues 523 to 543 (IFDLLLALCIGAYLGMAYTAV) traverse the membrane as a helical segment. The Cytoplasmic portion of the chain corresponds to 544–563 (QHFHVLYKTVQRLLLKAKAQ).

Belongs to the nicastrin family. As to quaternary structure, component of the back of Sec61 (BOS) complex, composed of NCLN/Nicalin, NOMO1 and TMEM147. The BOS complex is part of the multi-pass translocon (MPT) complex, composed of three subcomplexes, the GEL complex (composed of RAB5IF/OPTI and TMCO1), the BOS complex (composed of NCLN/Nicalin, NOMO1 and TMEM147) and the PAT complex (composed of WDR83OS/Asterix and CCDC47). The MPT complex associates with the SEC61 complex.

The protein localises to the endoplasmic reticulum membrane. Its function is as follows. Component of the multi-pass translocon (MPT) complex that mediates insertion of multi-pass membrane proteins into the lipid bilayer of membranes. The MPT complex takes over after the SEC61 complex: following membrane insertion of the first few transmembrane segments of proteins by the SEC61 complex, the MPT complex occludes the lateral gate of the SEC61 complex to promote insertion of subsequent transmembrane regions. May antagonize Nodal signaling and subsequent organization of axial structures during mesodermal patterning, via its interaction with NOMO. In Rattus norvegicus (Rat), this protein is BOS complex subunit NCLN (Ncln).